A 269-amino-acid polypeptide reads, in one-letter code: Large ribosomal subunit protein uL3m (269 aa).

A mitochondrion-targeting transit peptide spans 1–19; sequence MSKFLQGSIFSISKLHVRY.

Belongs to the universal ribosomal protein uL3 family. As to quaternary structure, component of the mitochondrial large ribosomal subunit (mt-LSU). Mature yeast 74S mitochondrial ribosomes consist of a small (37S) and a large (54S) subunit. The 37S small subunit contains a 15S ribosomal RNA (15S mt-rRNA) and 34 different proteins. The 54S large subunit contains a 21S rRNA (21S mt-rRNA) and 46 different proteins.

The protein localises to the mitochondrion. Its function is as follows. Component of the mitochondrial ribosome (mitoribosome), a dedicated translation machinery responsible for the synthesis of mitochondrial genome-encoded proteins, including at least some of the essential transmembrane subunits of the mitochondrial respiratory chain. The mitoribosomes are attached to the mitochondrial inner membrane and translation products are cotranslationally integrated into the membrane. The polypeptide is Large ribosomal subunit protein uL3m (MRPL9) (Saccharomyces cerevisiae (strain ATCC 204508 / S288c) (Baker's yeast)).